A 1003-amino-acid polypeptide reads, in one-letter code: Anoctamin-2 (1003 aa).

The segment at 1–68 is disordered; it reads MATPGPRDIP…PCGGESTRSS (68 aa). Residues 1–365 lie on the Cytoplasmic side of the membrane; it reads MATPGPRDIP…FGEKIGLYFA (365 aa). The segment covering 10–21 has biased composition (low complexity); it reads PLLPGSPRRLSP. A helical membrane pass occupies residues 366 to 386; that stretch reads WLGLYTSFLIPSSVIGVIVFL. Over 387 to 434 the chain is Extracellular; that stretch reads YGCATIEEDIPSREMCDQQNAFTMCPLCDKSCDYWNLSSACGTAQASH. Residue Asn-422 is glycosylated (N-linked (GlcNAc...) asparagine). Residues 435-455 form a helical membrane-spanning segment; it reads LFDNPATVFFSIFMALWATMF. Residues 456 to 538 are Cytoplasmic-facing; the sequence is LENWKRLQMR…KDRFPGYLMN (83 aa). Residues 539 to 559 traverse the membrane as a helical segment; it reads FASILFMIALTFSIVFGVIVY. Residues 560–582 lie on the Extracellular side of the membrane; the sequence is RITTAAALSLNKATRSNVRVTVT. Residues 583–603 traverse the membrane as a helical segment; the sequence is ATAVIINLVVILILDEIYGAV. The Cytoplasmic portion of the chain corresponds to 604 to 623; sequence AKWLTKIEVPKTEQTFEERL. Residues 624–644 form a helical membrane-spanning segment; sequence ILKAFLLKFVNAYSPIFYVAF. The Extracellular segment spans residues 645 to 748; it reads FKGRFVGRPG…YTGLTPEYME (104 aa). A helical transmembrane segment spans residues 749-769; the sequence is MIIQFGFVTLFVASFPLAPVF. The Cytoplasmic segment spans residues 770 to 801; the sequence is ALLNNVIEVRLDAKKFVTELRRPDAVRTKDIG. A helical membrane pass occupies residues 802–822; it reads IWFDILSGIGKFSVISNAFVI. The Extracellular portion of the chain corresponds to 823–907; the sequence is AITSDFIPRL…QYWFILSARL (85 aa). Asn-841, Asn-849, and Asn-856 each carry an N-linked (GlcNAc...) asparagine glycan. The chain crosses the membrane as a helical span at residues 908 to 928; it reads AFVIIFQNLVMFLSVLVDWMI. Residues 929-1003 are Cytoplasmic-facing; the sequence is PDIPTDISDQ…MSSGSQHTNV (75 aa). A disordered region spans residues 961 to 1003; it reads MDEPALRSPGGGDRSRSRAASSAPSGQSQLGSMMSSGSQHTNV. The segment covering 978-1003 has biased composition (low complexity); that stretch reads RAASSAPSGQSQLGSMMSSGSQHTNV. The DLG4 binding (PDZ) signature appears at 1001–1003; that stretch reads TNV.

This sequence belongs to the anoctamin family. Homodimer. Component of a presynaptic protein complex recruited to specialized plasma membrane domains of photoreceptors. Interacts with DLG4 by its C-terminal region. In terms of tissue distribution, retina, especially in the photoreceptor synaptic terminals.

It is found in the cell membrane. It catalyses the reaction chloride(in) = chloride(out). Channel activity is repressed by chloride inhibitors; strongly by niflumic acid (NFA), partially by flufenamic acid (FFA), and only slightly by meclofenamic acid (MFA), 5-Nitro-2-(3-phenylpropylamino)benzoic acid (NPPB), 4-acetamido-4'-isothiocyanato-stilben-2,2'-disulfonate (SITS), and 4,4'-diisothiocyanatostilbene-2,2'-disulfonic acid (DIDS). Its function is as follows. Calcium-activated chloride channel (CaCC) which may play a role in olfactory signal transduction. Odorant molecules bind to odor-sensing receptors (OSRs), leading to an increase in calcium entry that activates CaCC current which amplifies the depolarization of the OSR cells, ANO2 seems to be the underlying chloride channel involved in this process. May mediate light perception amplification in retina. The sequence is that of Anoctamin-2 (ANO2) from Homo sapiens (Human).